An 828-amino-acid chain; its full sequence is Periplasmic nitrate reductase (828 aa).

Residues 1 to 31 (MKLSRRHFMKANAVAAAAAVAGITIPIAVRA) constitute a signal peptide (tat-type signal). The 4Fe-4S Mo/W bis-MGD-type domain maps to 39–95 (IHWDKAPCRFCGVGCGVLVGTQNGRIVASQGDPEAPVNRGLNCIKGYFLPKIMYGQD). Residues Cys46, Cys49, Cys53, and Cys81 each contribute to the [4Fe-4S] cluster site. Mo-bis(molybdopterin guanine dinucleotide)-binding positions include Lys83, Gln150, Asn175, Cys179, 212–219 (WGSNMAEM), 243–247 (STYQH), 262–264 (QTD), Met372, Gln376, Asn482, 508–509 (SD), Lys531, Asp558, and 718–727 (TGRVLEHWHT). Phe794 lines the substrate pocket. Positions 802 and 819 each coordinate Mo-bis(molybdopterin guanine dinucleotide).

This sequence belongs to the prokaryotic molybdopterin-containing oxidoreductase family. NasA/NapA/NarB subfamily. Component of the periplasmic nitrate reductase NapAB complex composed of NapA and NapB. [4Fe-4S] cluster serves as cofactor. The cofactor is Mo-bis(molybdopterin guanine dinucleotide). In terms of processing, predicted to be exported by the Tat system. The position of the signal peptide cleavage has not been experimentally proven.

The protein localises to the periplasm. The catalysed reaction is 2 Fe(II)-[cytochrome] + nitrate + 2 H(+) = 2 Fe(III)-[cytochrome] + nitrite + H2O. Its function is as follows. Catalytic subunit of the periplasmic nitrate reductase complex NapAB. Receives electrons from NapB and catalyzes the reduction of nitrate to nitrite. The protein is Periplasmic nitrate reductase of Pectobacterium atrosepticum (strain SCRI 1043 / ATCC BAA-672) (Erwinia carotovora subsp. atroseptica).